The following is a 594-amino-acid chain: ATP-dependent lipid A-core flippase (594 aa).

6 helical membrane passes run 35–55 (FVLA…IPKV), 64–84 (FGGS…GVAL), 135–155 (AVIF…ITLV), 161–181 (VVAL…VVAV), 262–282 (VTAF…MIQA), and 289–309 (IGGF…LKHL). Residues 36-318 (VLAIIAMGLV…LADLNQPLQR (283 aa)) form the ABC transmembrane type-1 domain. The ABC transporter domain occupies 350–588 (LVFDNVGFRY…NGLYAGLHRI (239 aa)). Position 384-391 (384-391 (GPSGSGKT)) interacts with ATP.

It belongs to the ABC transporter superfamily. Lipid exporter (TC 3.A.1.106) family. Homodimer.

Its subcellular location is the cell inner membrane. It catalyses the reaction ATP + H2O + lipid A-core oligosaccharideSide 1 = ADP + phosphate + lipid A-core oligosaccharideSide 2.. Its function is as follows. Involved in lipopolysaccharide (LPS) biosynthesis. Translocates lipid A-core from the inner to the outer leaflet of the inner membrane. Transmembrane domains (TMD) form a pore in the inner membrane and the ATP-binding domain (NBD) is responsible for energy generation. The protein is ATP-dependent lipid A-core flippase of Cupriavidus metallidurans (strain ATCC 43123 / DSM 2839 / NBRC 102507 / CH34) (Ralstonia metallidurans).